The sequence spans 241 residues: Small ribosomal subunit protein uS5 (241 aa).

Residues 1–53 (MSDNEKETQVAEETQNTQAAAESNNEDRKSRRGQRGEGRRGERRNRREESHEN) form a disordered region. Over residues 11 to 22 (AEETQNTQAAAE) the composition is skewed to low complexity. Over residues 25 to 53 (NEDRKSRRGQRGEGRRGERRNRREESHEN) the composition is skewed to basic and acidic residues. The S5 DRBM domain maps to 55 to 118 (MLDRVVTINR…LDAKKHMFTV (64 aa)).

The protein belongs to the universal ribosomal protein uS5 family. In terms of assembly, part of the 30S ribosomal subunit. Contacts proteins S4 and S8.

In terms of biological role, with S4 and S12 plays an important role in translational accuracy. Its function is as follows. Located at the back of the 30S subunit body where it stabilizes the conformation of the head with respect to the body. This chain is Small ribosomal subunit protein uS5, found in Bifidobacterium adolescentis (strain ATCC 15703 / DSM 20083 / NCTC 11814 / E194a).